Here is a 438-residue protein sequence, read N- to C-terminus: Transcriptional regulator Mb0495 (438 aa).

The span at 1–12 (MYSTNRTSQSLS) shows a compositional bias: polar residues. Residues 1 to 22 (MYSTNRTSQSLSRKPGRKHQLR) form a disordered region. A DNA-binding region (H-T-H motif) is located at residues 52 to 73 (VGRDVIAGSTSLSIATVNRQVI).

It belongs to the ROK (NagC/XylR) family.

Its function is as follows. Positively regulates the expression of PE13 and PPE18. The sequence is that of Transcriptional regulator Mb0495 from Mycobacterium bovis (strain ATCC BAA-935 / AF2122/97).